The following is a 440-amino-acid chain: Glycerophosphocholine cholinephosphodiesterase ENPP6 (440 aa).

The signal sequence occupies residues 1-22; it reads MAVKLGTLLLALALGLAQPASA. Substrate-binding residues include Asp32, Ser71, and Asn92. 2 residues coordinate Zn(2+): Asp32 and Ser71. Residue Ser71 is the Nucleophile of the active site. The residue at position 71 (Ser71) is a Phosphoserine. N-linked (GlcNAc...) asparagine glycosylation is found at Asn100 and Asn118. Cys142 and Cys154 form a disulfide bridge. Asp193 lines the substrate pocket. The Zn(2+) site is built by Asp193, His197, Asp240, and His241. His241 provides a ligand contact to substrate. Asn341 carries an N-linked (GlcNAc...) asparagine glycan. Residue His354 participates in substrate binding. His354 lines the Zn(2+) pocket. The N-linked (GlcNAc...) asparagine glycan is linked to Asn404. The GPI-anchor amidated alanine moiety is linked to residue Ala418. Positions 419-440 are cleaved as a propeptide — removed in mature form; sequence GTTPPVQPSHCALALILLFLLA.

This sequence belongs to the nucleotide pyrophosphatase/phosphodiesterase family. In terms of assembly, homodimer; disulfide-linked. Homotetramer. The cofactor is Zn(2+).

The protein resides in the cell membrane. The catalysed reaction is sn-glycerol 3-phosphocholine + H2O = phosphocholine + glycerol + H(+). The enzyme catalyses a 1-acyl-sn-glycero-3-phosphocholine + H2O = a 1-acyl-sn-glycerol + phosphocholine + H(+). It catalyses the reaction a 1-O-alkyl-sn-glycero-3-phosphocholine + H2O = a 1-O-alkyl-sn-glycerol + phosphocholine + H(+). It carries out the reaction 1-dodecanoyl-sn-glycero-3-phosphocholine + H2O = 1-dodecanoyl-sn-glycerol + phosphocholine + H(+). The catalysed reaction is 1-hexadecanoyl-sn-glycero-3-phosphocholine + H2O = 1-hexadecanoyl-sn-glycerol + phosphocholine + H(+). The enzyme catalyses 1-(5Z,8Z,11Z,14Z-eicosatetraenoyl)-sn-glycero-3-phosphocholine + H2O = 1-(5Z,8Z,11Z,14Z-eicosatetraenoyl)-sn-glycerol + phosphocholine + H(+). It catalyses the reaction 1-tetradecanoyl-sn-glycero-3-phosphocholine + H2O = 1-tetradecanoyl-sn-glycerol + phosphocholine + H(+). It carries out the reaction sphing-4-enine-phosphocholine + H2O = sphing-4-enine + phosphocholine + H(+). The catalysed reaction is 1-(9Z-octadecenoyl)-sn-glycero-3-phosphocholine + H2O = 1-(9Z-octadecenoyl)-sn-glycerol + phosphocholine + H(+). The enzyme catalyses 1-(9Z,12Z)-octadecadienoyl-sn-glycero-3-phosphocholine + H2O = 1-(9Z,12Z-octadecadienoyl)-sn-glycerol + phosphocholine + H(+). It catalyses the reaction glycero-2-phosphocholine + H2O = phosphocholine + glycerol + H(+). With respect to regulation, inhibited by EDTA and EGTA in vitro. Functionally, choline-specific glycerophosphodiesterase that hydrolyzes glycerophosphocholine (GPC) and lysophosphatidylcholine (LPC) and contributes to supplying choline to the cells. Has a preference for LPC with short (12:0 and 14:0) or polyunsaturated (18:2 and 20:4) fatty acids. In vitro, hydrolyzes only choline-containing lysophospholipids, such as sphingosylphosphorylcholine (SPC), platelet-activating factor (PAF) and lysoPAF, but not other lysophospholipids. This is Glycerophosphocholine cholinephosphodiesterase ENPP6 from Pongo abelii (Sumatran orangutan).